The primary structure comprises 457 residues: Argininosuccinate lyase (457 aa).

The protein belongs to the lyase 1 family. Argininosuccinate lyase subfamily.

It is found in the cytoplasm. It catalyses the reaction 2-(N(omega)-L-arginino)succinate = fumarate + L-arginine. It functions in the pathway amino-acid biosynthesis; L-arginine biosynthesis; L-arginine from L-ornithine and carbamoyl phosphate: step 3/3. This chain is Argininosuccinate lyase, found in Salmonella arizonae (strain ATCC BAA-731 / CDC346-86 / RSK2980).